We begin with the raw amino-acid sequence, 286 residues long: Beta-lactamase SHV-2 (286 aa).

Positions 1–21 (MRYIRLCIISLLATLPLAVHA) are cleaved as a signal peptide. The active-site Acyl-ester intermediate is the serine 66. A disulfide bridge connects residues cysteine 73 and cysteine 119. Residue glutamate 164 is the Proton acceptor of the active site. Residue 230-232 (KTG) coordinates substrate.

This sequence belongs to the class-A beta-lactamase family.

The enzyme catalyses a beta-lactam + H2O = a substituted beta-amino acid. Functionally, this enzyme hydrolyzes cefotaxime, ceftazidime and other broad spectrum cephalosporins. The protein is Beta-lactamase SHV-2 (bla) of Klebsiella pneumoniae.